A 225-amino-acid polypeptide reads, in one-letter code: MAAAGGGGGGAAAAGRAYSFKVVLLGEGCVGKTSLVLRYCENKFNDKHITTLQASFLTKKLNIGGKRVNLAIWDTAGQERFHALGPIYYRDSNGAILVYDITDEDSFQKVKNWVKELRKMLGNEICLCIVGNKIDLEKERHVSIQEAESYAESVGAKHYHTSAKQNKGIEELFLDLCKRMIETAQVDERAKGNGSSQPGTARRGVQIIDDEPQAQTSGGGCCSSG.

Residue A2 is modified to N-acetylalanine. Residues G28, G31, K32, T33, S34, N45, D46, H48, T50, and T51 each contribute to the GTP site. T33 serves as a coordination point for Mg(2+). A Switch 1 motif is present at residues 43-56; the sequence is KFNDKHITTLQASF. Mg(2+) contacts are provided by T51 and D74. The Switch 2 motif lies at 76–94; it reads AGQERFHALGPIYYRDSNG. G77, N132, K133, D135, A163, and K164 together coordinate GTP. Positions 188–225 are disordered; the sequence is ERAKGNGSSQPGTARRGVQIIDDEPQAQTSGGGCCSSG. 2 S-geranylgeranyl cysteine lipidation sites follow: C221 and C222. C222 bears the Cysteine methyl ester mark. A propeptide spans 223–225 (removed in mature form); the sequence is SSG.

This sequence belongs to the small GTPase superfamily. Rab family. Interacts with the cytoplasmic tail of integrins ITGA1, ITGA2, ITGA5, ITGA6, ITGA11 and ITGB1. Interacts with RABGEF1 (via VPS9 domain). Interacts with ANKRD27. Interacts with VAMP7. Interacts (in GTP-bound form) with VAMP8 in response to starvation; the interaction probably regulates VAMP8 endolysosomal trafficking. Interacts (active GTP-bound form) with TMED10; the interaction is indirect and regulates TMED10 abundance and localization at the Golgi. Mg(2+) is required as a cofactor. As to expression, widely expressed. In jejunal tissue, predominantly expressed in the apical region of the epithelial cell layer of the villi, weak expression, if any, in the crypt epithelium. Capillary endothelium and some cell types in the lamina propria also show expression.

It is found in the endoplasmic reticulum membrane. It localises to the golgi apparatus. The protein localises to the trans-Golgi network. Its subcellular location is the golgi apparatus membrane. The protein resides in the early endosome membrane. It is found in the cytoplasmic vesicle membrane. It localises to the cleavage furrow. The protein localises to the cell projection. Its subcellular location is the neuron projection. The enzyme catalyses GTP + H2O = GDP + phosphate + H(+). Its activity is regulated as follows. Regulated by guanine nucleotide exchange factors (GEFs) including ANKRD27 and RABGEF1, which promote the exchange of bound GDP for free GTP. Regulated by GTPase activating proteins (GAPs) which increase the GTP hydrolysis activity. Inhibited by GDP dissociation inhibitors (GDIs). Functionally, the small GTPases Rab are key regulators of intracellular membrane trafficking, from the formation of transport vesicles to their fusion with membranes. Rabs cycle between an inactive GDP-bound form and an active GTP-bound form that is able to recruit to membranes different sets of downstream effectors directly responsible for vesicle formation, movement, tethering and fusion. RAB21 is involved in membrane trafficking control. During the mitosis of adherent cells, controls the endosomal trafficking of integrins which is required for the successful completion of cytokinesis. Regulates integrin internalization and recycling, but does not influence the traffic of endosomally translocated receptors in general. As a result, may regulate cell adhesion and migration. Involved in neurite growth. Following SBF2/MTMT13-mediated activation in response to starvation-induced autophagy, binds to and regulates SNARE protein VAMP8 endolysosomal transport required for SNARE-mediated autophagosome-lysosome fusion. Modulates protein levels of the cargo receptors TMED2 and TMED10, and required for appropriate Golgi localization of TMED10. In Homo sapiens (Human), this protein is Ras-related protein Rab-21.